Consider the following 121-residue polypeptide: LOB domain-containing protein 23 (121 aa).

One can recognise an LOB domain in the interval 4 to 105; the sequence is KRCAACKYLR…NELAKTQAEI (102 aa).

The protein belongs to the LOB domain-containing protein family.

This Arabidopsis thaliana (Mouse-ear cress) protein is LOB domain-containing protein 23 (LBD23).